A 662-amino-acid chain; its full sequence is MGKYKILVVTGDSLLAGSTNLVQLWLVGEHAEADLGKQLRPLRGRKTELEIDVPLHLGRLLVVKLRKHKGLLDSDWFCKWITVQGPGIQGEAFFPCYSWVQGKETIYLPEGTALKVNDDTKNLFRKYREQELEDRRNVYRWGSWKEGLILPIAGSTERDLPRNQRFMEDKDLDFSLSLAKVLKDFAIKGTLDFVSRVQHLEDYQKVFPHSKTALAGRVRDSWKEDALFGYQFLNGANPMLLRRSKRLPARLVLPPGMEDLQTQLEKELKAGSLFEADFSLLDGVKPNVIIFKQQHVAAPLVMLKLQSDGRLLPMVIQLQPPRHGCPPPLLFLPSDPPMAWLLAKIWVRSSDFQVHQLQSHLLRGHLMAEVISVATMRSLPSLHPIYKLLAPHFRYTMEINTLARNNLVSEWGIFDLVVSTGSGGHVDILQRATACLTYRSFCPPDDLADRGLLDVKSSLYARDALRLWEIISRYVGRMVELFYKNDREVKEDPELQVWCREVTEIGLLGAQDRGFPLSLESRAQLCRFVTMCIFTCTGQHASTHLGQLDWYSWIPNGPCTMRKPPPTSKNVTEGDILDALPCLQQARMQITFTKFLGRHQPVMVALGQHKEEYFSDPGARAVLKQFQEELAVMDKEIEVRNASLDLPYEYLRPSMVENSVTI.

A PLAT domain is found at 2–114; it reads GKYKILVVTG…TIYLPEGTAL (113 aa). Residues 114–662 enclose the Lipoxygenase domain; the sequence is LKVNDDTKNL…PSMVENSVTI (549 aa). The Fe cation site is built by histidine 360, histidine 365, histidine 540, histidine 544, and isoleucine 662.

The protein belongs to the lipoxygenase family. The cofactor is Fe cation.

It is found in the cytoplasm. It catalyses the reaction (5Z,8Z,11Z,14Z)-eicosatetraenoate + O2 = (12S)-hydroperoxy-(5Z,8Z,10E,14Z)-eicosatetraenoate. It carries out the reaction 1-O-methyl-(9Z,12Z)-octadecadienoate + O2 = 1-O-methyl-(13S)-hydroperoxy-(9Z,11E)-octadecadienoate. The catalysed reaction is (8Z,11Z,14Z)-eicosatrienoate + O2 = (12S)-hydroperoxy-(8Z,10E,14Z)-eicosatrienoate. The enzyme catalyses (5Z,8Z,11Z)-eicosatrienoate + O2 = (12S)-hydroperoxy-(5Z,8Z,10E)-eicosatrienoate. It catalyses the reaction 1-O-methyl-(5Z,8Z,11Z,14Z)-eicosatetraenoate + O2 = 1-O-methyl-(12S)-hydroperoxy-(5Z,8Z,10E,14Z)-eicosatetraenoate. It carries out the reaction (9Z,12Z)-octadecadienoate + O2 = (13S)-hydroperoxy-(9Z,11E)-octadecadienoate. The catalysed reaction is (4Z,7Z,10Z,13Z,16Z,19Z)-docosahexaenoate + O2 = (14S)-hydroperoxy-(4Z,7Z,10Z,12E,16Z,19Z)-docosahexaenoate. It functions in the pathway lipid metabolism; hydroperoxy eicosatetraenoic acid biosynthesis. Its activity is regulated as follows. Arachidonate 12-lipoxygenase activity is decreased when the pH decreases from 7.4 to 6.0. Functionally, catalyzes the regio and stereo-specific incorporation of a single molecule of dioxygen into free and esterified polyunsaturated fatty acids generating lipid hydroperoxides that can be further reduced to the corresponding hydroxy species. Shows increasing catalytic activity within the series arachidonic acid &lt; 5,8,11-eicosatrienoic acid &lt; linoleic acid &lt; 8,11,14-eicosatrienoic acid. The sequence is that of Polyunsaturated fatty acid (12S)/(13S)-lipoxygenase, epidermal-type from Rattus norvegicus (Rat).